A 277-amino-acid chain; its full sequence is NH(3)-dependent NAD(+) synthetase (277 aa).

Residue 46–53 (GISGGQDS) participates in ATP binding. D52 contributes to the Mg(2+) binding site. A deamido-NAD(+)-binding site is contributed by R142. An ATP-binding site is contributed by T162. E167 contacts Mg(2+). Deamido-NAD(+) is bound by residues K175 and D182. Residues K191 and T213 each coordinate ATP. 263–264 (HK) lines the deamido-NAD(+) pocket.

This sequence belongs to the NAD synthetase family. In terms of assembly, homodimer.

The catalysed reaction is deamido-NAD(+) + NH4(+) + ATP = AMP + diphosphate + NAD(+) + H(+). Its pathway is cofactor biosynthesis; NAD(+) biosynthesis; NAD(+) from deamido-NAD(+) (ammonia route): step 1/1. Catalyzes the ATP-dependent amidation of deamido-NAD to form NAD. Uses ammonia as a nitrogen source. This Corynebacterium glutamicum (strain R) protein is NH(3)-dependent NAD(+) synthetase.